A 313-amino-acid polypeptide reads, in one-letter code: Ribosomal protein L11 methyltransferase (313 aa).

4 residues coordinate S-adenosyl-L-methionine: threonine 164, glycine 185, aspartate 207, and asparagine 249.

This sequence belongs to the methyltransferase superfamily. PrmA family.

It is found in the cytoplasm. The catalysed reaction is L-lysyl-[protein] + 3 S-adenosyl-L-methionine = N(6),N(6),N(6)-trimethyl-L-lysyl-[protein] + 3 S-adenosyl-L-homocysteine + 3 H(+). Methylates ribosomal protein L11. The chain is Ribosomal protein L11 methyltransferase from Clostridium botulinum (strain Alaska E43 / Type E3).